Reading from the N-terminus, the 81-residue chain is Putative truncated GMC-type inactive oxidoreductase R833 (81 aa).

Belongs to the GMC oxidoreductase family.

This is Putative truncated GMC-type inactive oxidoreductase R833 from Acanthamoeba polyphaga mimivirus (APMV).